Here is an 886-residue protein sequence, read N- to C-terminus: Alanine--tRNA ligase (886 aa).

H568, H572, C670, and H674 together coordinate Zn(2+).

Belongs to the class-II aminoacyl-tRNA synthetase family. The cofactor is Zn(2+).

The protein localises to the cytoplasm. It carries out the reaction tRNA(Ala) + L-alanine + ATP = L-alanyl-tRNA(Ala) + AMP + diphosphate. In terms of biological role, catalyzes the attachment of alanine to tRNA(Ala) in a two-step reaction: alanine is first activated by ATP to form Ala-AMP and then transferred to the acceptor end of tRNA(Ala). Also edits incorrectly charged Ser-tRNA(Ala) and Gly-tRNA(Ala) via its editing domain. The polypeptide is Alanine--tRNA ligase (Prochlorococcus marinus (strain NATL1A)).